Consider the following 195-residue polypeptide: 3-isopropylmalate dehydratase small subunit (195 aa).

This sequence belongs to the LeuD family. LeuD type 1 subfamily. As to quaternary structure, heterodimer of LeuC and LeuD.

The enzyme catalyses (2R,3S)-3-isopropylmalate = (2S)-2-isopropylmalate. The protein operates within amino-acid biosynthesis; L-leucine biosynthesis; L-leucine from 3-methyl-2-oxobutanoate: step 2/4. Functionally, catalyzes the isomerization between 2-isopropylmalate and 3-isopropylmalate, via the formation of 2-isopropylmaleate. This is 3-isopropylmalate dehydratase small subunit from Koribacter versatilis (strain Ellin345).